The following is a 363-amino-acid chain: Alanine racemase (363 aa).

The Proton acceptor; specific for D-alanine role is filled by Lys-35. Position 35 is an N6-(pyridoxal phosphate)lysine (Lys-35). Residue Arg-134 participates in substrate binding. Tyr-259 serves as the catalytic Proton acceptor; specific for L-alanine. Met-307 lines the substrate pocket.

This sequence belongs to the alanine racemase family. Requires pyridoxal 5'-phosphate as cofactor.

The catalysed reaction is L-alanine = D-alanine. Its pathway is amino-acid biosynthesis; D-alanine biosynthesis; D-alanine from L-alanine: step 1/1. Catalyzes the interconversion of L-alanine and D-alanine. May also act on other amino acids. The chain is Alanine racemase (alr) from Shewanella denitrificans (strain OS217 / ATCC BAA-1090 / DSM 15013).